The primary structure comprises 1059 residues: Carbamoyl phosphate synthase large chain (1059 aa).

The segment at methionine 1–glutamate 401 is carboxyphosphate synthetic domain. ATP is bound by residues arginine 129, arginine 169, glycine 175, glycine 176, arginine 208, isoleucine 210, glutamate 215, glycine 241, isoleucine 242, histidine 243, glutamine 284, and glutamate 298. The ATP-grasp 1 domain occupies lysine 133 to valine 327. Positions 284, 298, and 300 each coordinate Mg(2+). Mn(2+) is bound by residues glutamine 284, glutamate 298, and asparagine 300. The interval valine 402–serine 546 is oligomerization domain. Residues valine 547–tyrosine 929 form a carbamoyl phosphate synthetic domain region. The ATP-grasp 2 domain maps to glutamate 671–leucine 861. Arginine 707, serine 746, isoleucine 748, glutamate 752, glycine 777, valine 778, histidine 779, serine 780, glutamine 820, and glutamate 832 together coordinate ATP. Mg(2+) contacts are provided by glutamine 820, glutamate 832, and asparagine 834. Mn(2+) contacts are provided by glutamine 820, glutamate 832, and asparagine 834. Positions leucine 930 to isoleucine 1059 constitute an MGS-like domain. Residues leucine 930 to isoleucine 1059 form an allosteric domain region.

The protein belongs to the CarB family. As to quaternary structure, composed of two chains; the small (or glutamine) chain promotes the hydrolysis of glutamine to ammonia, which is used by the large (or ammonia) chain to synthesize carbamoyl phosphate. Tetramer of heterodimers (alpha,beta)4. Mg(2+) is required as a cofactor. The cofactor is Mn(2+).

It catalyses the reaction hydrogencarbonate + L-glutamine + 2 ATP + H2O = carbamoyl phosphate + L-glutamate + 2 ADP + phosphate + 2 H(+). The catalysed reaction is hydrogencarbonate + NH4(+) + 2 ATP = carbamoyl phosphate + 2 ADP + phosphate + 2 H(+). The protein operates within amino-acid biosynthesis; L-arginine biosynthesis; carbamoyl phosphate from bicarbonate: step 1/1. Its pathway is pyrimidine metabolism; UMP biosynthesis via de novo pathway; (S)-dihydroorotate from bicarbonate: step 1/3. Its function is as follows. Large subunit of the glutamine-dependent carbamoyl phosphate synthetase (CPSase). CPSase catalyzes the formation of carbamoyl phosphate from the ammonia moiety of glutamine, carbonate, and phosphate donated by ATP, constituting the first step of 2 biosynthetic pathways, one leading to arginine and/or urea and the other to pyrimidine nucleotides. The large subunit (synthetase) binds the substrates ammonia (free or transferred from glutamine from the small subunit), hydrogencarbonate and ATP and carries out an ATP-coupled ligase reaction, activating hydrogencarbonate by forming carboxy phosphate which reacts with ammonia to form carbamoyl phosphate. In Streptococcus sanguinis (strain SK36), this protein is Carbamoyl phosphate synthase large chain.